The chain runs to 706 residues: Drebrin (706 aa).

At Ala-2 the chain carries N-acetylalanine. Residues 3–134 (GVSFSGHRLE…DAGAIGQRLS (132 aa)) enclose the ADF-H domain. Phosphoserine occurs at positions 141 and 142. A compositionally biased stretch (basic and acidic residues) spans 209-236 (ERMEQERQEQEERERRYREREQQIEEHR). The tract at residues 209–497 (ERMEQERQEQ…AEPAASVTSV (289 aa)) is disordered. Residue Ser-241 is modified to Phosphoserine. A compositionally biased stretch (basic and acidic residues) spans 288-298 (DNPREFFRQQE). Residues 331–345 (SDSGPSSSSSSSSSP) show a composition bias toward low complexity. Ser-344 carries the post-translational modification Phosphoserine. Polar residues predominate over residues 357–366 (RTPNLSSSLP). 2 positions are modified to phosphothreonine: Thr-379 and Thr-383. A compositionally biased stretch (polar residues) spans 382 to 396 (PTRSPSDSSTASTPI). Residues Ser-385, Ser-387, and Ser-393 each carry the phosphoserine modification. Thr-394 is modified (phosphothreonine). The span at 411-422 (QPPPPPPPPPPT) shows a compositional bias: pro residues. Residues 453–497 (AAEPPQAQEPPLLQSSPLEDSMCTESPEQAALAAPAEPAASVTSV) are compositionally biased toward low complexity. Phosphoserine is present on Ser-468. Position 550 is a phosphothreonine (Thr-550). The segment at 633–677 (EPHLLTNGETTQKEGTQASEGYFSQSQEEEFAQSEEPCAKVPPPV) is disordered. Polar residues predominate over residues 639 to 651 (NGETTQKEGTQAS). The residue at position 658 (Ser-658) is a Phosphoserine.

Interacts with RUFY3. Interacts with CXCR4; this interaction is enhanced by antigenic stimulation. Interacts (via ADF-H domain) with ZMYND8 (via N-terminus); the interaction leads to sequestering of ZMYND8 in the cytoplasm. Expressed in the hippocampus, with expression in the pyramidal cells of CA1, CA2 and CA3 and in the granule cells of the dentate gyrus (at protein level). Highly expressed in brain, also present in stomach and to a lesser degree in kidney, colon, and urinary bladder. The E2 isoform is specifically expressed in adult stomach, kidney, and cultured cells.

Its subcellular location is the cytoplasm. It localises to the cell projection. It is found in the dendrite. The protein localises to the cell cortex. The protein resides in the cell junction. Its subcellular location is the growth cone. Functionally, actin cytoskeleton-organizing protein that plays a role in the formation of cell projections. Required for actin polymerization at immunological synapses (IS) and for the recruitment of the chemokine receptor CXCR4 to IS. Plays a role in dendritic spine morphogenesis and organization, including the localization of the dopamine receptor DRD1 to the dendritic spines. Involved in memory-related synaptic plasticity in the hippocampus. This chain is Drebrin (Dbn1), found in Mus musculus (Mouse).